Here is a 516-residue protein sequence, read N- to C-terminus: ADP-ribosylation factor GTPase-activating protein 3 (516 aa).

The Arf-GAP domain occupies Leu10 to Arg126. The segment at Cys25 to Cys48 adopts a C4-type zinc-finger fold. Residues Ala170 to Gly199 are disordered. A compositionally biased stretch (polar residues) spans Ser173–Gly190. Ser231 is subject to Phosphoserine. A coiled-coil region spans residues Asn243 to Ala264. Residues Ser270, Ser274, Ser331, and Ser370 each carry the phosphoserine modification. Residues Thr393 to Ala417 are disordered. Ser428, Ser451, Ser453, Ser455, Ser457, and Ser458 each carry phosphoserine.

It is found in the cytoplasm. The protein resides in the golgi apparatus membrane. GAP activity stimulated by phosphatidylinositol 4,5-bisphosphate (PIP2). Its function is as follows. GTPase-activating protein (GAP) for ADP ribosylation factor 1 (ARF1). Hydrolysis of ARF1-bound GTP may lead to dissociation of coatomer from Golgi-derived membranes to allow fusion with target membranes. The sequence is that of ADP-ribosylation factor GTPase-activating protein 3 from Pongo abelii (Sumatran orangutan).